A 155-amino-acid polypeptide reads, in one-letter code: Immunoglobulin domain-containing protein oig-4 (155 aa).

Positions 1 to 22 are cleaved as a signal peptide; sequence MSFRLWGRCIFFFCFLLEAIDS. N-linked (GlcNAc...) asparagine glycans are attached at residues N55 and N114. The Ig-like C2-type domain occupies 73 to 154; that stretch reads GYKLLIICKA…MAKNFKAEYT (82 aa). C80 and C136 are oxidised to a cystine.

As to quaternary structure, interacts with the non-alpha subunit of nicotinic acetylcholine receptor unc-29 and lev-10 to stabilize the complex formed between unc-29 and lev-10. In terms of tissue distribution, expressed in body wall muscle cells, the pharyngeal muscle cell pm6 and in four head neurons.

It is found in the synapse. Its subcellular location is the secreted. Its function is as follows. Required for the localization of acetylcholine receptors at neuromuscular junctions and for subsequently controlling the response evoked by receptor stimulation. This is Immunoglobulin domain-containing protein oig-4 from Caenorhabditis elegans.